The following is a 381-amino-acid chain: Putative F-box protein At4g17200 (381 aa).

Residues 1–47 (MTTMSDLSPDLVGEILTRVPMTSLISVRCTCKMWNALSKEGIFFKAA) enclose the F-box domain.

The chain is Putative F-box protein At4g17200 from Arabidopsis thaliana (Mouse-ear cress).